Reading from the N-terminus, the 147-residue chain is Lysozyme C-3 (147 aa).

Positions 1–18 (MKALVILGLLFLSVAVQG) are cleaved as a signal peptide. The C-type lysozyme domain occupies 19 to 147 (KVFERCELAR…VSSYVEGCKL (129 aa)). Cystine bridges form between Cys24–Cys145, Cys48–Cys133, Cys83–Cys99, and Cys95–Cys113. Catalysis depends on residues Glu53 and Asp71.

This sequence belongs to the glycosyl hydrolase 22 family. Monomer. Expressed in stomach.

The protein localises to the secreted. It catalyses the reaction Hydrolysis of (1-&gt;4)-beta-linkages between N-acetylmuramic acid and N-acetyl-D-glucosamine residues in a peptidoglycan and between N-acetyl-D-glucosamine residues in chitodextrins.. Lysozymes have primarily a bacteriolytic function; those in tissues and body fluids are associated with the monocyte-macrophage system and enhance the activity of immunoagents. The protein is Lysozyme C-3 of Ovis aries (Sheep).